An 862-amino-acid chain; its full sequence is Probable inorganic carbon transporter subunit DabA (862 aa).

C365, D367, H540, and C555 together coordinate Zn(2+).

It belongs to the inorganic carbon transporter (TC 9.A.2) DabA family. In terms of assembly, forms a complex with DabB. Requires Zn(2+) as cofactor.

The protein localises to the cell inner membrane. Its function is as follows. Part of an energy-coupled inorganic carbon pump. The sequence is that of Probable inorganic carbon transporter subunit DabA from Vibrio cholerae serotype O1 (strain ATCC 39315 / El Tor Inaba N16961).